The sequence spans 192 residues: Capsid protein (192 aa).

A disordered region spans residues 1–30 (MEDSQPIKVRQPSISAPGTHLSPNPGQQSP). Positions 12-30 (PSISAPGTHLSPNPGQQSP) are enriched in polar residues.

It belongs to the tymoviruses capsid protein family.

Its subcellular location is the virion. In terms of biological role, self-assembles to form a T=3 icosahedral capsid composed of 180 copies of the capsid protein. The capsid encapsulates the single-stranded RNA genome. This is Capsid protein from Ononis.